The following is a 207-amino-acid chain: dTTP/UTP pyrophosphatase (207 aa).

Asp79 (proton acceptor) is an active-site residue.

This sequence belongs to the Maf family. YhdE subfamily. A divalent metal cation serves as cofactor.

The protein resides in the cytoplasm. It carries out the reaction dTTP + H2O = dTMP + diphosphate + H(+). The catalysed reaction is UTP + H2O = UMP + diphosphate + H(+). Functionally, nucleoside triphosphate pyrophosphatase that hydrolyzes dTTP and UTP. May have a dual role in cell division arrest and in preventing the incorporation of modified nucleotides into cellular nucleic acids. The chain is dTTP/UTP pyrophosphatase from Rhodopseudomonas palustris (strain ATCC BAA-98 / CGA009).